A 462-amino-acid chain; its full sequence is Glycogen synthase 1 (462 aa).

Position 6 (Arg6) interacts with ADP-alpha-D-glucose.

It belongs to the glycosyltransferase 1 family. Bacterial/plant glycogen synthase subfamily.

It catalyses the reaction [(1-&gt;4)-alpha-D-glucosyl](n) + ADP-alpha-D-glucose = [(1-&gt;4)-alpha-D-glucosyl](n+1) + ADP + H(+). It functions in the pathway glycan biosynthesis; glycogen biosynthesis. In terms of biological role, synthesizes alpha-1,4-glucan chains using ADP-glucose. The protein is Glycogen synthase 1 of Bradyrhizobium diazoefficiens (strain JCM 10833 / BCRC 13528 / IAM 13628 / NBRC 14792 / USDA 110).